Here is a 504-residue protein sequence, read N- to C-terminus: ATP synthase subunit alpha 2 (504 aa).

169 to 176 (GDRQTGKT) contacts ATP.

It belongs to the ATPase alpha/beta chains family. As to quaternary structure, F-type ATPases have 2 components, CF(1) - the catalytic core - and CF(0) - the membrane proton channel. CF(1) has five subunits: alpha(3), beta(3), gamma(1), delta(1), epsilon(1). CF(0) has three main subunits: a(1), b(2) and c(9-12). The alpha and beta chains form an alternating ring which encloses part of the gamma chain. CF(1) is attached to CF(0) by a central stalk formed by the gamma and epsilon chains, while a peripheral stalk is formed by the delta and b chains.

Its subcellular location is the cell membrane. It catalyses the reaction ATP + H2O + 4 H(+)(in) = ADP + phosphate + 5 H(+)(out). Functionally, produces ATP from ADP in the presence of a proton gradient across the membrane. The alpha chain is a regulatory subunit. The chain is ATP synthase subunit alpha 2 from Listeria monocytogenes serotype 4b (strain F2365).